The chain runs to 296 residues: Indole-3-glycerol phosphate synthase (296 aa).

Belongs to the TrpC family.

It carries out the reaction 1-(2-carboxyphenylamino)-1-deoxy-D-ribulose 5-phosphate + H(+) = (1S,2R)-1-C-(indol-3-yl)glycerol 3-phosphate + CO2 + H2O. It participates in amino-acid biosynthesis; L-tryptophan biosynthesis; L-tryptophan from chorismate: step 4/5. The polypeptide is Indole-3-glycerol phosphate synthase (Microcystis aeruginosa (strain NIES-843 / IAM M-2473)).